We begin with the raw amino-acid sequence, 68 residues long: Protein DsrB (68 aa).

It belongs to the DsrB family.

This is Protein DsrB from Sodalis glossinidius (strain morsitans).